The primary structure comprises 118 residues: Ribonuclease P protein component (118 aa).

The protein belongs to the RnpA family. As to quaternary structure, consists of a catalytic RNA component (M1 or rnpB) and a protein subunit.

The enzyme catalyses Endonucleolytic cleavage of RNA, removing 5'-extranucleotides from tRNA precursor.. Its function is as follows. RNaseP catalyzes the removal of the 5'-leader sequence from pre-tRNA to produce the mature 5'-terminus. It can also cleave other RNA substrates such as 4.5S RNA. The protein component plays an auxiliary but essential role in vivo by binding to the 5'-leader sequence and broadening the substrate specificity of the ribozyme. This chain is Ribonuclease P protein component, found in Levilactobacillus brevis (strain ATCC 367 / BCRC 12310 / CIP 105137 / JCM 1170 / LMG 11437 / NCIMB 947 / NCTC 947) (Lactobacillus brevis).